The chain runs to 361 residues: Phospho-N-acetylmuramoyl-pentapeptide-transferase (361 aa).

The next 10 helical transmembrane spans lie at 25–45 (TGGA…WIID), 71–91 (TPTM…VLWA), 94–114 (LNPY…VGFY), 133–153 (WRLL…VRLG), 169–189 (VAIN…VGAG), 200–220 (GLAI…SYLA), 240–260 (LSVL…FNAP), 264–284 (IFMG…IAVA), 289–309 (IVLA…IVQV), and 338–358 (QIVI…LSTL).

Belongs to the glycosyltransferase 4 family. MraY subfamily. Mg(2+) serves as cofactor.

Its subcellular location is the cell inner membrane. It carries out the reaction UDP-N-acetyl-alpha-D-muramoyl-L-alanyl-gamma-D-glutamyl-meso-2,6-diaminopimeloyl-D-alanyl-D-alanine + di-trans,octa-cis-undecaprenyl phosphate = di-trans,octa-cis-undecaprenyl diphospho-N-acetyl-alpha-D-muramoyl-L-alanyl-D-glutamyl-meso-2,6-diaminopimeloyl-D-alanyl-D-alanine + UMP. The protein operates within cell wall biogenesis; peptidoglycan biosynthesis. Catalyzes the initial step of the lipid cycle reactions in the biosynthesis of the cell wall peptidoglycan: transfers peptidoglycan precursor phospho-MurNAc-pentapeptide from UDP-MurNAc-pentapeptide onto the lipid carrier undecaprenyl phosphate, yielding undecaprenyl-pyrophosphoryl-MurNAc-pentapeptide, known as lipid I. The chain is Phospho-N-acetylmuramoyl-pentapeptide-transferase from Rhodopseudomonas palustris (strain BisB18).